Reading from the N-terminus, the 370-residue chain is Flagellar P-ring protein (370 aa).

A signal peptide spans 1 to 27 (MPARPIPVPLLALALAAALAVPSPAAA).

It belongs to the FlgI family. As to quaternary structure, the basal body constitutes a major portion of the flagellar organelle and consists of four rings (L,P,S, and M) mounted on a central rod.

It localises to the periplasm. Its subcellular location is the bacterial flagellum basal body. Functionally, assembles around the rod to form the L-ring and probably protects the motor/basal body from shearing forces during rotation. This is Flagellar P-ring protein from Anaeromyxobacter sp. (strain K).